The sequence spans 852 residues: Lon protease homolog 2, peroxisomal (852 aa).

N-acetylserine is present on Ser-2. In terms of domain architecture, Lon N-terminal spans 13-222 (LPLLLTHESV…MTIPLLVRQI (210 aa)). ATP is bound at residue 375 to 382 (GPPGVGKT). The Lon proteolytic domain maps to 651–837 (LSQPGVAIGL…DEVLNAAFDG (187 aa)). Active-site residues include Ser-743 and Lys-786. The Microbody targeting signal motif lies at 850–852 (SKL).

This sequence belongs to the peptidase S16 family. In terms of assembly, interacts with PEX5. Interacts with TYSND1. May interact with enzymes involved in beta-oxidation of fatty acids, including ACOX1/AOX.

Its subcellular location is the peroxisome matrix. The catalysed reaction is Hydrolysis of proteins in presence of ATP.. In terms of biological role, ATP-dependent serine protease that mediates the selective degradation of misfolded and unassembled polypeptides in the peroxisomal matrix. Necessary for type 2 peroxisome targeting signal (PTS2)-containing protein processing and facilitates peroxisome matrix protein import. May indirectly regulate peroxisomal fatty acid beta-oxidation through degradation of the self-processed forms of TYSND1. The chain is Lon protease homolog 2, peroxisomal (Lonp2) from Mus musculus (Mouse).